The following is a 162-amino-acid chain: Endoribonuclease YbeY (162 aa).

The Zn(2+) site is built by histidine 117, histidine 121, and histidine 127.

This sequence belongs to the endoribonuclease YbeY family. The cofactor is Zn(2+).

Its subcellular location is the cytoplasm. Functionally, single strand-specific metallo-endoribonuclease involved in late-stage 70S ribosome quality control and in maturation of the 3' terminus of the 16S rRNA. This is Endoribonuclease YbeY from Francisella tularensis subsp. holarctica (strain OSU18).